Consider the following 269-residue polypeptide: 4-hydroxy-tetrahydrodipicolinate reductase (269 aa).

Residues 9–14 (GAGGRM) and Glu35 contribute to the NAD(+) site. Arg36 is a binding site for NADP(+). NAD(+) is bound by residues 98 to 100 (GTT) and 122 to 125 (ASNY). The active-site Proton donor/acceptor is the His155. His156 contacts (S)-2,3,4,5-tetrahydrodipicolinate. The active-site Proton donor is Lys159. 165 to 166 (GT) contacts (S)-2,3,4,5-tetrahydrodipicolinate.

Belongs to the DapB family.

The protein localises to the cytoplasm. It carries out the reaction (S)-2,3,4,5-tetrahydrodipicolinate + NAD(+) + H2O = (2S,4S)-4-hydroxy-2,3,4,5-tetrahydrodipicolinate + NADH + H(+). The enzyme catalyses (S)-2,3,4,5-tetrahydrodipicolinate + NADP(+) + H2O = (2S,4S)-4-hydroxy-2,3,4,5-tetrahydrodipicolinate + NADPH + H(+). Its pathway is amino-acid biosynthesis; L-lysine biosynthesis via DAP pathway; (S)-tetrahydrodipicolinate from L-aspartate: step 4/4. Its function is as follows. Catalyzes the conversion of 4-hydroxy-tetrahydrodipicolinate (HTPA) to tetrahydrodipicolinate. The sequence is that of 4-hydroxy-tetrahydrodipicolinate reductase from Actinobacillus pleuropneumoniae serotype 3 (strain JL03).